A 572-amino-acid chain; its full sequence is Vacuolar protein sorting-associated protein vps901 (572 aa).

Composition is skewed to basic and acidic residues over residues 1–31 (MDYP…EKPL) and 39–53 (DEQR…KNHD). Residues 1–108 (MDYPSFHEDP…HENNPGQQEI (108 aa)) form a disordered region. Residues 69-80 (QYEQTDSSSDQE) are compositionally biased toward polar residues. A compositionally biased stretch (basic and acidic residues) spans 82 to 98 (MNEKQSLDKENRNDNIP). Positions 219 to 357 (VEEDRVLSEK…IETLDCSSLT (139 aa)) constitute a VPS9 domain. Positions 430-502 (QIDTPESKEY…IVHEEQPVDD (73 aa)) are disordered. Residues 445–457 (PRGSSHSGSFTTD) show a composition bias toward polar residues. The region spanning 529–571 (REKAEAITALRAMFPAFDSEVIEVVLNAQQGRLSSSIDSLLEM) is the CUE domain.

Required for vacuolar protein sorting; may be required for the consumption of transport vesicles containing vacuolar protein precursors. Required for vacuolar fusion. In Schizosaccharomyces pombe (strain 972 / ATCC 24843) (Fission yeast), this protein is Vacuolar protein sorting-associated protein vps901 (vps901).